A 240-amino-acid polypeptide reads, in one-letter code: tRNA (guanine-N(7)-)-methyltransferase (240 aa).

The disordered stretch occupies residues 1-20; that stretch reads MTESHDTPITPDGEARPHRR. Positions 70, 95, 122, and 145 each coordinate S-adenosyl-L-methionine. D145 is an active-site residue. Substrate contacts are provided by residues K149, D181, and 218–221; that span reads TKFE.

It belongs to the class I-like SAM-binding methyltransferase superfamily. TrmB family.

It carries out the reaction guanosine(46) in tRNA + S-adenosyl-L-methionine = N(7)-methylguanosine(46) in tRNA + S-adenosyl-L-homocysteine. Its pathway is tRNA modification; N(7)-methylguanine-tRNA biosynthesis. Functionally, catalyzes the formation of N(7)-methylguanine at position 46 (m7G46) in tRNA. This chain is tRNA (guanine-N(7)-)-methyltransferase, found in Pseudomonas putida (strain ATCC 47054 / DSM 6125 / CFBP 8728 / NCIMB 11950 / KT2440).